We begin with the raw amino-acid sequence, 145 residues long: Large ribosomal subunit protein uL24 (145 aa).

Disordered stretches follow at residues 1-21 (MKFN…HFNA) and 122-145 (KAKS…KMQE). K136 participates in a covalent cross-link: Glycyl lysine isopeptide (Lys-Gly) (interchain with G-Cter in SUMO2). A Phosphothreonine modification is found at T139.

Belongs to the universal ribosomal protein uL24 family. Component of the large ribosomal subunit. Interacts with DHX33. In terms of processing, ufmylated by UFL1 in response to endoplasmic reticulum stress, promoting reticulophagy of endoplasmic reticulum sheets.

The protein localises to the cytoplasm. Its function is as follows. Component of the large ribosomal subunit. The ribosome is a large ribonucleoprotein complex responsible for the synthesis of proteins in the cell. The sequence is that of Large ribosomal subunit protein uL24 (Rpl26) from Rattus norvegicus (Rat).